The sequence spans 483 residues: MAIQMPDINLALMLPEIVISVVAMGLLLASAWWEGAEGARRIRRIAAGALMVAMVITLLGVGATQSSTFGGMFVNDRFAAFMKVMLYLSTLLPMVVSWVYLEKSKLGNGEYFVLTLFAMLGGMFMISSGSFLVLYLGIELLSLAIYVLAAYKRDDLASNEAGLKYFVLGSMASGILLYGISLIYGVTGSVDFATINAYLQQDHHSMLGITMGLILVVSGLSFKIAAAPFHMWAPDVYEGAPTSVTAFMAAMPKIAAFAALFRVLVEAFGPMHATWGPIMALLAVVSMGVGALAGLGQSNIKRLLAYSSIGHVGYALIGLAVGNQMGYEAVLVYLTIYIFMNVGAFGLILVLNKEGFGDQIEDYKGLSAKRPGLALLMAIFMFSMAGIPPLAGFMAKLQIFMAAIDAHMYTVAILGVLFSAVSAFYYLKVIKTMYFDEAERAFDMPMDFLSRAIVGVSGILVVLWGILPGSLMASVAETIKSLM.

14 helical membrane-spanning segments follow: residues 8–28 (INLA…GLLL), 45–65 (IAAG…GATQ), 78–98 (FAAF…VVSW), 106–126 (LGNG…MFMI), 131–151 (FLVL…LAAY), 166–186 (FVLG…IYGV), 206–226 (MLGI…KIAA), 241–261 (PTSV…AALF), 275–295 (WGPI…LAGL), 303–323 (LLAY…AVGN), 330–350 (VLVY…LILV), 373–393 (LALL…LAGF), 399–419 (IFMA…VLFS), and 452–472 (AIVG…GSLM).

Belongs to the complex I subunit 2 family. In terms of assembly, NDH-1 is composed of 14 different subunits. Subunits NuoA, H, J, K, L, M, N constitute the membrane sector of the complex.

It localises to the cell inner membrane. The enzyme catalyses a quinone + NADH + 5 H(+)(in) = a quinol + NAD(+) + 4 H(+)(out). In terms of biological role, NDH-1 shuttles electrons from NADH, via FMN and iron-sulfur (Fe-S) centers, to quinones in the respiratory chain. The immediate electron acceptor for the enzyme in this species is believed to be ubiquinone. Couples the redox reaction to proton translocation (for every two electrons transferred, four hydrogen ions are translocated across the cytoplasmic membrane), and thus conserves the redox energy in a proton gradient. This chain is NADH-quinone oxidoreductase subunit N, found in Magnetococcus marinus (strain ATCC BAA-1437 / JCM 17883 / MC-1).